A 133-amino-acid chain; its full sequence is Small ribosomal subunit protein uS8 (133 aa).

The protein belongs to the universal ribosomal protein uS8 family. Part of the 30S ribosomal subunit. Contacts proteins S5 and S12.

Its function is as follows. One of the primary rRNA binding proteins, it binds directly to 16S rRNA central domain where it helps coordinate assembly of the platform of the 30S subunit. The sequence is that of Small ribosomal subunit protein uS8 from Prochlorococcus marinus (strain SARG / CCMP1375 / SS120).